The following is a 364-amino-acid chain: Lipid-A-disaccharide synthase (364 aa).

It belongs to the LpxB family.

It carries out the reaction a lipid X + a UDP-2-N,3-O-bis[(3R)-3-hydroxyacyl]-alpha-D-glucosamine = a lipid A disaccharide + UDP + H(+). Its pathway is bacterial outer membrane biogenesis; LPS lipid A biosynthesis. Functionally, condensation of UDP-2,3-diacylglucosamine and 2,3-diacylglucosamine-1-phosphate to form lipid A disaccharide, a precursor of lipid A, a phosphorylated glycolipid that anchors the lipopolysaccharide to the outer membrane of the cell. This is Lipid-A-disaccharide synthase from Campylobacter jejuni (strain RM1221).